Here is a 448-residue protein sequence, read N- to C-terminus: Phosphoglucosamine mutase (448 aa).

Serine 99 acts as the Phosphoserine intermediate in catalysis. Serine 99, aspartate 239, aspartate 241, and aspartate 243 together coordinate Mg(2+). Position 99 is a phosphoserine (serine 99).

Belongs to the phosphohexose mutase family. The cofactor is Mg(2+). In terms of processing, activated by phosphorylation.

The enzyme catalyses alpha-D-glucosamine 1-phosphate = D-glucosamine 6-phosphate. Its function is as follows. Catalyzes the conversion of glucosamine-6-phosphate to glucosamine-1-phosphate. The sequence is that of Phosphoglucosamine mutase from Lachnoclostridium phytofermentans (strain ATCC 700394 / DSM 18823 / ISDg) (Clostridium phytofermentans).